We begin with the raw amino-acid sequence, 143 residues long: Small ribosomal subunit protein uS12 (143 aa).

The segment covering 1-15 (MGKCRGLRTARKLRD) has biased composition (basic residues). Residues 1 to 27 (MGKCRGLRTARKLRDHRREQKWHDKQY) form a disordered region. A compositionally biased stretch (basic and acidic residues) spans 16–27 (HRREQKWHDKQY).

It belongs to the universal ribosomal protein uS12 family. In terms of assembly, component of the 40S small ribosomal subunit.

The protein localises to the cytoplasm. The protein resides in the cytosol. Its subcellular location is the rough endoplasmic reticulum. This Ictalurus punctatus (Channel catfish) protein is Small ribosomal subunit protein uS12 (rps23).